The chain runs to 295 residues: MNTIIEEYLNFIQIEKGLSNNTIGAYRRDLKKYKDYLEDNKISHIDFIDRQIIQECLGHLIDMGQSSKSLARFISTIRSFHQFALREKYAAKDPTVLIETPKYEKKLPDVLEIDEVIALLETPDLTKNNGYRDRTMLELLYATGMRVTEIIQLDVEDVNLMMGFVRVFGKGNKERIVPLGDTVIEYLTTYIETVRPQLLKQTTTQALFLNMHGKSLSRQGIWKIIKQYGLKANINKTLTPHTLRHSFATHLLENGADLRAVQEMLGHSDISTTQLYTHVSKSQIRKMYTQFHPRA.

A Core-binding (CB) domain is found at 1–85 (MNTIIEEYLN…TIRSFHQFAL (85 aa)). In terms of domain architecture, Tyr recombinase spans 106–289 (KLPDVLEIDE…SKSQIRKMYT (184 aa)). Residues R146, K170, H241, R244, and H267 contribute to the active site. Y276 serves as the catalytic O-(3'-phospho-DNA)-tyrosine intermediate.

This sequence belongs to the 'phage' integrase family. XerD subfamily. In terms of assembly, forms a cyclic heterotetrameric complex composed of two molecules of XerC and two molecules of XerD.

The protein resides in the cytoplasm. Its function is as follows. Site-specific tyrosine recombinase, which acts by catalyzing the cutting and rejoining of the recombining DNA molecules. The XerC-XerD complex is essential to convert dimers of the bacterial chromosome into monomers to permit their segregation at cell division. It also contributes to the segregational stability of plasmids. This chain is Tyrosine recombinase XerD, found in Staphylococcus epidermidis (strain ATCC 35984 / DSM 28319 / BCRC 17069 / CCUG 31568 / BM 3577 / RP62A).